We begin with the raw amino-acid sequence, 431 residues long: Glucose-6-phosphate isomerase (431 aa).

Catalysis depends on glutamate 284, which acts as the Proton donor. Active-site residues include histidine 305 and lysine 420.

Belongs to the GPI family.

The protein localises to the cytoplasm. The enzyme catalyses alpha-D-glucose 6-phosphate = beta-D-fructose 6-phosphate. Its pathway is carbohydrate biosynthesis; gluconeogenesis. It functions in the pathway carbohydrate degradation; glycolysis; D-glyceraldehyde 3-phosphate and glycerone phosphate from D-glucose: step 2/4. In terms of biological role, catalyzes the reversible isomerization of glucose-6-phosphate to fructose-6-phosphate. The polypeptide is Glucose-6-phosphate isomerase (Mycoplasma genitalium (strain ATCC 33530 / DSM 19775 / NCTC 10195 / G37) (Mycoplasmoides genitalium)).